The sequence spans 605 residues: Inactive LRR receptor-like serine/threonine-protein kinase BIR2 (605 aa).

An N-terminal signal peptide occupies residues 1 to 28 (MKEIGSKPRKLLPLCFIIFLCFCSSVMA). The Extracellular segment spans residues 29 to 229 (ADEDDIRCLR…CGGLSKKNLG (201 aa)). Asparagine 58 carries an N-linked (GlcNAc...) asparagine glycan. 4 LRR repeats span residues 101–125 (CASLQKLDLSSNRLSGNIPTELCNW), 127–150 (PFLVSLDLSNNELNGEIPPDLAKC), 152–173 (FVNSLVLSDNRLSGQIPVQFSA), and 174–197 (LGRLGRFSVANNDLSGRIPVFFSS). The chain crosses the membrane as a helical span at residues 230–250 (IIIAAGVFGAAASMLLAFGIW). At 251-605 (WYYHLKWTRR…IFDTQENEKV (355 aa)) the chain is on the cytoplasmic side. Residue serine 271 is modified to Phosphoserine; by BAK1. Position 283 is a phosphothreonine; by BAK1 (threonine 283). Serine 286 bears the Phosphoserine; by BAK1 mark. At threonine 304 the chain carries Phosphothreonine; by BAK1. The Protein kinase domain occupies 307 to 578 (FNSENIIVST…FQAYQSLKAI (272 aa)). 313–321 (IVSTRTGTT) is a binding site for ATP. Position 330 is a phosphoserine; by BAK1 (serine 330). Lysine 335 lines the ATP pocket. A Phosphoserine; by BAK1 modification is found at serine 389. Threonine 402 is subject to Phosphothreonine. Phosphoserine; by BAK1 occurs at positions 448 and 462. Threonine 466 carries the phosphothreonine; by BAK1 modification. Tyrosine 479 carries the phosphotyrosine modification. Phosphothreonine is present on threonine 482. Residue serine 486 is modified to Phosphoserine. Threonine 533 is subject to Phosphothreonine; by BAK1.

The protein belongs to the protein kinase superfamily. Ser/Thr protein kinase family. In terms of assembly, interacts constitutively with BAK1, when phosphorylated, thereby preventing interaction with the ligand-binding LRR-RLK FLS2. Upon infection, pathogen-associated molecular patterns (PAMP) perception leads to BIR2 release from the BAK1 complex and enables the recruitment of BAK1 into the FLS2 complex. Post-translationally, phosphorylated by BAK1, this interacts promotes interaction with BAK1.

Its subcellular location is the cell membrane. Functionally, pseudokinases lacking protein kinase activity and unable to bind ATP-analogs. Negative regulator of pathogen-associated molecular patterns- (PAMP-) triggered immunity by limiting BAK1-receptor complex formation in the absence of ligands. The chain is Inactive LRR receptor-like serine/threonine-protein kinase BIR2 from Arabidopsis thaliana (Mouse-ear cress).